Consider the following 923-residue polypeptide: Cell cycle and apoptosis regulator protein 2 (923 aa).

The disordered stretch occupies residues 1-35 (MSQFKRQRINPLPGGRNFSGTASTSLLGPPPGLLT). Thr35 is subject to Phosphothreonine. At Lys112 the chain carries N6-acetyllysine; by KAT8. An N6-methyllysine modification is found at Lys123. Ser124 is modified (phosphoserine). Disordered stretches follow at residues 178-218 (LNRF…KKPR), 446-510 (KAAE…PAVI), and 568-643 (VSPP…SEDL). Residue Arg180 is modified to Omega-N-methylarginine. A compositionally biased stretch (basic and acidic residues) spans 188–200 (GRLDQGRSDDYDS). Lys215 carries the N6-acetyllysine; by KAT8 modification. A compositionally biased stretch (low complexity) spans 446–458 (KAAEAAPPTQEAQ). Thr454 carries the phosphothreonine; by ATM, ATR and CK2 modification. Thr484 carries the post-translational modification Phosphothreonine. Position 569 is a phosphoserine (Ser569). Residues 572 to 602 (EPEKEEAAKEEATKEEEAIKEEVVKEPKDEA) are compositionally biased toward basic and acidic residues. Residue Lys591 forms a Glycyl lysine isopeptide (Lys-Gly) (interchain with G-Cter in SUMO2 and SUMO3); alternate linkage. Lys591 is covalently cross-linked (Glycyl lysine isopeptide (Lys-Gly) (interchain with G-Cter in SUMO2); alternate). Residues 610–670 (ESEAPLKEDG…EEFAGAKLED (61 aa)) form an interaction with MCC region. Ser627, Ser675, Ser678, Ser681, Ser687, and Ser808 each carry phosphoserine. The segment at 704–923 (DCLLAFVFFD…VEKEEPAPSN (220 aa)) is interaction with NR1D1. A coiled-coil region spans residues 829 to 909 (LENKIHTLEL…QLEIQRVVEK (81 aa)). Thr897 is modified (phosphothreonine).

Component of the DBIRD complex. Interacts with ZNF326/ZIRD; the interaction is direct. Interacts (via N-terminus) with SIRT1, which inhibits the deacetylation of substrates. Interacts (via N-terminus) with SUV39H1; this interaction abolishes the interaction with SIRT1. Component of a nuclear receptor-mediated transcription complex composed of at least ZNF335, CCAR2 and EMSY; the complex stimulates the transcription of nuclear receptor target genes such as SOX9 and HOXA1. Within the complex interacts with EMSY and interacts with ZNF335 (via C-terminus). Components of this complex may associate with components of a histone methylation complex to form a complex at least composed of ZNF335, HCFC1, CCAR2, EMSY, MKI67, RBBP5, ASH2L and WDR5. Within this complex, interacts with ASH2L. Interacts with NR1D1. Interacts (via N-terminus) with ESR1 and ESR2. Interacts (via N-terminus) with HDAC3 (via C-terminus). Interacts with HDAC1 and MED2F. Interacts with MCC. Interacts (via N-terminus) with NR1H2 and NR1H3 in a ligand-independent manner. Interacts with CSNK2A1. Interacts (via N-terminus) with p53/TP53. Interacts (via N-terminus) with BRCA1 (via the BRCT domains). Interacts (via N-terminus) with CHEK2 (via protein kinase domain). Interacts with PSEM3. Interacts (via N-terminus) with PSIA3 and SENP1. The sumoylated form shows a preferential interaction with SIRT1 as compared to its unmodified form. Interacts with CECR2; may form part of the CERF-1 and/or CEF-5 ISWI chromatin remodeling complexes in embryonic stem cells. Post-translationally, ATM/ATR-mediated phosphorylation at Thr-454 upon DNA damage promotes binding to SIRT1. Phosphorylation at Thr-454 promotes its sumoylation by switching the binding partner of CCAR2 from SENP1 to PIAS3. Acetylation at Lys-112 and Lys-215 by KAT8 prevents inhibitory binding to SIRT1 and increases its deacetylase activity. In terms of processing, genotoxic stress induces its sumoylation and sumoylation promotes the SIRT1-CCAR2 interaction which in turn inhibits SIRT1-mediated deacetylation of p53/TP53. Sumoylation leads to transcriptional activation of p53/TP53 by sequestering SIRT1 from p53/TP53. Desumoylated by SENP1. In terms of tissue distribution, expressed in gastric carcinoma tissue and the expression gradually increases with the progression of the carcinoma (at protein level). Expressed ubiquitously in normal tissues. Expressed in 84 to 100% of neoplastic breast, lung, and colon tissues.

The protein localises to the nucleus. The protein resides in the cytoplasm. It localises to the cytoskeleton. Its subcellular location is the spindle. Functionally, core component of the DBIRD complex, a multiprotein complex that acts at the interface between core mRNP particles and RNA polymerase II (RNAPII) and integrates transcript elongation with the regulation of alternative splicing: the DBIRD complex affects local transcript elongation rates and alternative splicing of a large set of exons embedded in (A + T)-rich DNA regions. Inhibits SIRT1 deacetylase activity leading to increasing levels of p53/TP53 acetylation and p53-mediated apoptosis. Inhibits SUV39H1 methyltransferase activity. Mediates ligand-dependent transcriptional activation by nuclear hormone receptors. Plays a critical role in maintaining genomic stability and cellular integrity following UV-induced genotoxic stress. Regulates the circadian expression of the core clock components NR1D1 and BMAL1. Enhances the transcriptional repressor activity of NR1D1 through stabilization of NR1D1 protein levels by preventing its ubiquitination and subsequent degradation. Represses the ligand-dependent transcriptional activation function of ESR2. Acts as a regulator of PCK1 expression and gluconeogenesis by a mechanism that involves, at least in part, both NR1D1 and SIRT1. Negatively regulates the deacetylase activity of HDAC3 and can alter its subcellular localization. Positively regulates the beta-catenin pathway (canonical Wnt signaling pathway) and is required for MCC-mediated repression of the beta-catenin pathway. Represses ligand-dependent transcriptional activation function of NR1H2 and NR1H3 and inhibits the interaction of SIRT1 with NR1H3. Plays an important role in tumor suppression through p53/TP53 regulation; stabilizes p53/TP53 by affecting its interaction with ubiquitin ligase MDM2. Represses the transcriptional activator activity of BRCA1. Inhibits SIRT1 in a CHEK2 and PSEM3-dependent manner and inhibits the activity of CHEK2 in vitro. The chain is Cell cycle and apoptosis regulator protein 2 (CCAR2) from Homo sapiens (Human).